We begin with the raw amino-acid sequence, 383 residues long: Acetylornithine deacetylase (383 aa).

H80 serves as a coordination point for Zn(2+). The active site involves D82. Residue D112 coordinates Zn(2+). E144 is an active-site residue. 3 residues coordinate Zn(2+): E145, E169, and H355.

This sequence belongs to the peptidase M20A family. ArgE subfamily. Homodimer. Requires Zn(2+) as cofactor. The cofactor is Co(2+). Glutathione is required as a cofactor.

It is found in the cytoplasm. It carries out the reaction N(2)-acetyl-L-ornithine + H2O = L-ornithine + acetate. It functions in the pathway amino-acid biosynthesis; L-arginine biosynthesis; L-ornithine from N(2)-acetyl-L-ornithine (linear): step 1/1. Catalyzes the hydrolysis of the amide bond of N(2)-acetylated L-amino acids. Cleaves the acetyl group from N-acetyl-L-ornithine to form L-ornithine, an intermediate in L-arginine biosynthesis pathway, and a branchpoint in the synthesis of polyamines. This Pectobacterium carotovorum subsp. carotovorum (strain PC1) protein is Acetylornithine deacetylase.